The chain runs to 468 residues: Acyltransferase R4 (468 aa).

A run of 7 helical transmembrane segments spans residues 21–41 (GILS…LGYD), 70–90 (LFTI…CLFF), 133–153 (LNLL…TGFF), 252–272 (FLAA…PLFW), 308–328 (DPFG…YPTW), 388–408 (FAVY…LFSW), and 423–443 (IGFG…AAMF).

Belongs to the acyltransferase 3 family.

It localises to the membrane. It participates in secondary metabolite biosynthesis. Acyltransferase; part of the gene cluster that mediates the biosynthesis of squalestatin S1 (SQS1, also known as zaragozic acid A), a heavily oxidized fungal polyketide that offers potent cholesterol lowering activity by targeting squalene synthase (SS). SQS1 is composed of a 2,8-dioxobicyclic[3.2.1]octane-3,4,5-tricarboxyclic acid core that is connected to two lipophilic polyketide arms. These initial steps feature the priming of an unusual benzoic acid starter unit onto the highly reducing polyketide synthase pks2, followed by oxaloacetate extension and product release to generate a tricarboxylic acid containing product. The phenylalanine ammonia lyase (PAL) M7 and the acyl-CoA ligase M9 are involved in transforming phenylalanine into benzoyl-CoA. The citrate synthase-like protein R3 is involved in connecting the C-alpha-carbons of the hexaketide chain and oxaloacetate to afford the tricarboxylic acid unit. The potential hydrolytic enzymes, M8 and M10, are in close proximity to pks2 and may participate in product release. On the other side, the tetraketide arm is synthesized by a the squalestatin tetraketide synthase pks1 and enzymatically esterified to the core in the last biosynthetic step, by the acetyltransferase M4. The biosynthesis of the tetraketide must involve 3 rounds of chain extension. After the first and second rounds methyl-transfer occurs, and in all rounds of extension the ketoreductase and dehydratase are active. The enoyl reductase and C-MeT of pks1 are not active in the final round of extension. The acetyltransferase M4 appears to have a broad substrate selectivity for its acyl CoA substrate, allowing the in vitro synthesis of novel squalestatins. The biosynthesis of SQS1 requires several oxidative steps likely performed by oxidoreductases M1, R1 and R2. Finally, in support of the identification of the cluster as being responsible for SQS1 production, the cluster contains a gene encoding a putative squalene synthase (SS) R6, suggesting a likely mechanism for self-resistance. The chain is Acyltransferase R4 from Phoma sp. (strain ATCC 20986 / MF5453).